Here is a 282-residue protein sequence, read N- to C-terminus: Pantothenate synthetase (282 aa).

Residue 30–37 coordinates ATP; that stretch reads MGYLHAGH. His-37 serves as the catalytic Proton donor. (R)-pantoate is bound at residue Gln-61. Position 61 (Gln-61) interacts with beta-alanine. 147 to 150 is a binding site for ATP; the sequence is GKKD. Gln-153 lines the (R)-pantoate pocket. ATP contacts are provided by residues Val-176 and 184 to 187; that span reads MSSR.

This sequence belongs to the pantothenate synthetase family. As to quaternary structure, homodimer.

It is found in the cytoplasm. It carries out the reaction (R)-pantoate + beta-alanine + ATP = (R)-pantothenate + AMP + diphosphate + H(+). Its pathway is cofactor biosynthesis; (R)-pantothenate biosynthesis; (R)-pantothenate from (R)-pantoate and beta-alanine: step 1/1. Catalyzes the condensation of pantoate with beta-alanine in an ATP-dependent reaction via a pantoyl-adenylate intermediate. This chain is Pantothenate synthetase, found in Geotalea uraniireducens (strain Rf4) (Geobacter uraniireducens).